A 304-amino-acid polypeptide reads, in one-letter code: uncharacterized protein (304 aa).

This sequence belongs to the histone deacetylase family.

In terms of biological role, putative deacetylase. This is an uncharacterized protein from Synechocystis sp. (strain ATCC 27184 / PCC 6803 / Kazusa).